We begin with the raw amino-acid sequence, 108 residues long: Class I hydrophobin 3 (108 aa).

The N-terminal stretch at 1–17 (MFFQTTIVAALAFLAVA) is a signal peptide. Disulfide bonds link Cys28-Cys87, Cys35-Cys81, Cys36-Cys69, and Cys88-Cys101. N-linked (GlcNAc...) asparagine glycosylation is present at Asn37.

Belongs to the fungal hydrophobin family. Self-assembles to form functional amyloid fibrils called rodlets. Self-assembly into fibrillar rodlets occurs spontaneously at hydrophobic:hydrophilic interfaces and the rodlets further associate laterally to form amphipathic monolayers.

It localises to the secreted. Its subcellular location is the cell wall. In terms of biological role, aerial growth, conidiation, and dispersal of filamentous fungi in the environment rely upon a capability of their secreting small amphipathic proteins called hydrophobins (HPBs) with low sequence identity. Class I can self-assemble into an outermost layer of rodlet bundles on aerial cell surfaces, conferring cellular hydrophobicity that supports fungal growth, development and dispersal; whereas Class II form highly ordered films at water-air interfaces through intermolecular interactions but contribute nothing to the rodlet structure. Vmh3 is a class I hydrophobin that is essential for the maintenance of the surface hydrophobicity of the mycelium and might be involved in the development of fruiting bodies. Plays an important role in hyphal resistance against environmental stress. Necessary for the efficient biodegradation of lignin. This chain is Class I hydrophobin 3, found in Pleurotus ostreatus (Oyster mushroom).